A 104-amino-acid polypeptide reads, in one-letter code: Small ribosomal subunit protein uS10 (104 aa).

Belongs to the universal ribosomal protein uS10 family. In terms of assembly, part of the 30S ribosomal subunit.

Involved in the binding of tRNA to the ribosomes. In Albidiferax ferrireducens (strain ATCC BAA-621 / DSM 15236 / T118) (Rhodoferax ferrireducens), this protein is Small ribosomal subunit protein uS10.